Here is a 165-residue protein sequence, read N- to C-terminus: Protein SprT (165 aa).

Residues 22 to 163 (LAQANLKLGC…RCVHCGEQLV (142 aa)) enclose the SprT-like domain. Histidine 78 contributes to the Zn(2+) binding site. Glutamate 79 is a catalytic residue. Histidine 82 provides a ligand contact to Zn(2+).

It belongs to the SprT family. Zn(2+) is required as a cofactor.

Its subcellular location is the cytoplasm. The sequence is that of Protein SprT from Shigella dysenteriae serotype 1 (strain Sd197).